A 283-amino-acid polypeptide reads, in one-letter code: Pantothenate synthetase (283 aa).

30–37 (MGALHEGH) provides a ligand contact to ATP. The Proton donor role is filled by histidine 37. (R)-pantoate is bound at residue glutamine 61. A beta-alanine-binding site is contributed by glutamine 61. 147–150 (GMKD) lines the ATP pocket. Position 153 (glutamine 153) interacts with (R)-pantoate. Residues valine 176 and 184 to 187 (LSSR) each bind ATP.

This sequence belongs to the pantothenate synthetase family. In terms of assembly, homodimer.

It localises to the cytoplasm. The enzyme catalyses (R)-pantoate + beta-alanine + ATP = (R)-pantothenate + AMP + diphosphate + H(+). It participates in cofactor biosynthesis; (R)-pantothenate biosynthesis; (R)-pantothenate from (R)-pantoate and beta-alanine: step 1/1. Catalyzes the condensation of pantoate with beta-alanine in an ATP-dependent reaction via a pantoyl-adenylate intermediate. The polypeptide is Pantothenate synthetase (Endomicrobium trichonymphae).